A 926-amino-acid polypeptide reads, in one-letter code: Alanine--tRNA ligase (926 aa).

4 residues coordinate Zn(2+): histidine 615, histidine 619, cysteine 719, and histidine 723. The disordered stretch occupies residues 887–910 (RVGGGGGGPPDFAQGGGPDADALD). Residues 888-904 (VGGGGGGPPDFAQGGGP) show a composition bias toward gly residues.

The protein belongs to the class-II aminoacyl-tRNA synthetase family. Requires Zn(2+) as cofactor.

It is found in the cytoplasm. It carries out the reaction tRNA(Ala) + L-alanine + ATP = L-alanyl-tRNA(Ala) + AMP + diphosphate. Catalyzes the attachment of alanine to tRNA(Ala) in a two-step reaction: alanine is first activated by ATP to form Ala-AMP and then transferred to the acceptor end of tRNA(Ala). Also edits incorrectly charged Ser-tRNA(Ala) and Gly-tRNA(Ala) via its editing domain. The sequence is that of Alanine--tRNA ligase from Halorubrum lacusprofundi (strain ATCC 49239 / DSM 5036 / JCM 8891 / ACAM 34).